We begin with the raw amino-acid sequence, 33 residues long: Photosystem II reaction center protein Psb30 (33 aa).

A helical transmembrane segment spans residues 5–25; that stretch reads LIGQLVTVALVVGAGPIIIGA.

It belongs to the Psb30/Ycf12 family. As to quaternary structure, PSII is composed of 1 copy each of membrane proteins PsbA, PsbB, PsbC, PsbD, PsbE, PsbF, PsbH, PsbI, PsbJ, PsbK, PsbL, PsbM, PsbT, PsbX, PsbY, PsbZ, Psb30/Ycf12, peripheral proteins of the oxygen-evolving complex and a large number of cofactors. It forms dimeric complexes.

The protein resides in the plastid. It is found in the chloroplast thylakoid membrane. Functionally, a core subunit of photosystem II (PSII), probably helps stabilize the reaction center. The sequence is that of Photosystem II reaction center protein Psb30 from Ostreococcus tauri.